The primary structure comprises 190 residues: uncharacterized protein (190 aa).

Residues M1–D185 enclose the Macro domain.

This is an uncharacterized protein from Pyrococcus horikoshii (strain ATCC 700860 / DSM 12428 / JCM 9974 / NBRC 100139 / OT-3).